The sequence spans 555 residues: Transmembrane protein 87B (555 aa).

The signal sequence occupies residues 1-42 (MAAACRSEAGLLPSLLCRRPAGAQLLRVALCLLCWVPAAVDA). Residues 43 to 216 (VPELGLWTRT…HGYISASDWP (174 aa)) are Lumenal-facing. Residues Asn-68, Asn-160, and Asn-198 are each glycosylated (N-linked (GlcNAc...) asparagine). Residues 217–237 (LMIFYMVMCIVYILYGVLWLL) traverse the membrane as a helical segment. The Cytoplasmic segment spans residues 238 to 248 (WSACYWKDILR). The helical transmembrane segment at 249–269 (IQFWIAAVIFLGMLEKAVFYS) threads the bilayer. Topologically, residues 270–300 (EYQNINSTGLSTQGLLIFAELISAVKRTLAR) are lumenal. Residue Asn-275 is glycosylated (N-linked (GlcNAc...) asparagine). A helical transmembrane segment spans residues 301-321 (LLVIIVSLGYGIVKPRLGTVM). The Cytoplasmic portion of the chain corresponds to 322-323 (HR). Residues 324–344 (VIGLGLLYLIFAAIEGVMRVI) traverse the membrane as a helical segment. At 345-351 (GGSKHLA) the chain is on the lumenal side. Residues 352-372 (VVLTDIVLAVIDSIFVWFIFI) form a helical membrane-spanning segment. The Cytoplasmic portion of the chain corresponds to 373–394 (SLAQTMKTLRLRKNTVKFSLYR). The chain crosses the membrane as a helical span at residues 395–415 (HFTNTLIFAVLASIVFMVWTT). The Lumenal segment spans residues 416 to 429 (KTFRIAKCQSDWME). Residues 430–450 (LWVDDAFWSFLFSVILIVIMF) traverse the membrane as a helical segment. At 451–555 (LWRPSANNQR…EKMFSSEKIM (105 aa)) the chain is on the cytoplasmic side. Ser-470, Ser-497, and Ser-534 each carry phosphoserine.

The protein belongs to the LU7TM family. TMEM87 subfamily.

It localises to the golgi apparatus membrane. Functionally, may be involved in retrograde transport from endosomes to the trans-Golgi network (TGN). The polypeptide is Transmembrane protein 87B (Mus musculus (Mouse)).